The following is a 608-amino-acid chain: Glutamine--fructose-6-phosphate aminotransferase [isomerizing] (608 aa).

Residue Cys2 is the Nucleophile; for GATase activity of the active site. In terms of domain architecture, Glutamine amidotransferase type-2 spans 2-217 (CGIVGILGRG…DGDWAVLTRA (216 aa)). SIS domains are found at residues 284–423 (LPFD…ERGK) and 456–598 (LARY…VDQP). The active-site For Fru-6P isomerization activity is Lys603.

The protein localises to the cytoplasm. The enzyme catalyses D-fructose 6-phosphate + L-glutamine = D-glucosamine 6-phosphate + L-glutamate. Involved in the production of the root hair deformation (HAD) factor specifically on soybean. This chain is Glutamine--fructose-6-phosphate aminotransferase [isomerizing] (nodM), found in Bradyrhizobium diazoefficiens (strain JCM 10833 / BCRC 13528 / IAM 13628 / NBRC 14792 / USDA 110).